The sequence spans 294 residues: Probable 2-(5''-triphosphoribosyl)-3'-dephosphocoenzyme-A synthase (294 aa).

Belongs to the CitG/MdcB family.

The enzyme catalyses 3'-dephospho-CoA + ATP = 2'-(5''-triphospho-alpha-D-ribosyl)-3'-dephospho-CoA + adenine. The chain is Probable 2-(5''-triphosphoribosyl)-3'-dephosphocoenzyme-A synthase from Streptococcus pyogenes serotype M18 (strain MGAS8232).